We begin with the raw amino-acid sequence, 183 residues long: Transmembrane protein 252 (183 aa).

2 helical membrane passes run 8 to 28 and 39 to 59; these read ILCA…GFFI and LVVA…GIFW.

Its subcellular location is the membrane. This is Transmembrane protein 252 (Tmem252) from Mus musculus (Mouse).